Here is a 333-residue protein sequence, read N- to C-terminus: MAEGPYGRPVTASLTWQPTLSAADVDDIVSLLATAERADGTGPVSEDVRLTLRPDQRVGAARHLLAVSATGVEASGPRRPIVGYAHLGGALDSRQAEIVVDPGHRGLGIGRALATALTEALGDPPARLDVWAHGDLPPAAALAARLGFARTRVLFQLRRPLGAVAPLPEPQLPAGVTVRAFVPGRDDEAWLAVNAAAFADHPEQGRWTLDDLALRRAEPWFDPRGFFVAERDGQLVGFHWTKIHEVDETPPPGTRPGPIGEVYVVGVLPGAGGAGLGRALTLIGLRHLQAEGLAAVLLYVDEDNERAVRMYTGLDFTVHTRDVSYHWRGAAAD.

N-acetyltransferase domains follow at residues 18–170 (PTLS…LPEP) and 176–333 (VTVR…AAAD). 1D-myo-inositol 2-(L-cysteinylamino)-2-deoxy-alpha-D-glucopyranoside is bound at residue Glu46. 98–100 (IVV) is a binding site for acetyl-CoA. Residues Glu203, Lys242, and Glu261 each coordinate 1D-myo-inositol 2-(L-cysteinylamino)-2-deoxy-alpha-D-glucopyranoside. Acetyl-CoA-binding positions include 265–267 (VGV) and 272–278 (GGAGLGR). Tyr299 is a binding site for 1D-myo-inositol 2-(L-cysteinylamino)-2-deoxy-alpha-D-glucopyranoside. 304–309 (NERAVR) serves as a coordination point for acetyl-CoA.

Belongs to the acetyltransferase family. MshD subfamily. As to quaternary structure, monomer.

The catalysed reaction is 1D-myo-inositol 2-(L-cysteinylamino)-2-deoxy-alpha-D-glucopyranoside + acetyl-CoA = mycothiol + CoA + H(+). Its function is as follows. Catalyzes the transfer of acetyl from acetyl-CoA to desacetylmycothiol (Cys-GlcN-Ins) to form mycothiol. In Frankia alni (strain DSM 45986 / CECT 9034 / ACN14a), this protein is Mycothiol acetyltransferase.